The sequence spans 112 residues: Protein Churchill (112 aa).

Zn(2+)-binding residues include C2, C5, C30, C33, H59, C61, C64, H66, H71, C88, and C91.

Belongs to the Churchill family.

Its function is as follows. Transcriptional activator that mediates FGF signaling during neural development. Plays a role in the regulation of cell movement. Does not bind DNA by itself. The polypeptide is Protein Churchill (CHURC1) (Bos taurus (Bovine)).